We begin with the raw amino-acid sequence, 925 residues long: Translation initiation factor IF-2 (925 aa).

The disordered stretch occupies residues 190 to 329; sequence PAAPTSEAAP…RRRDEREAAV (140 aa). Pro residues-rich tracts occupy residues 199-209, 217-238, and 279-288; these read PPEPEPTPLPA, PVRP…PAPR, and RPVPAQPAPQ. Low complexity predominate over residues 289–307; it reads TPTRSGSGIAKKGAITKAG. The segment covering 320-329 has biased composition (basic and acidic residues); the sequence is RRRDEREAAV. Residues 417 to 589 form the tr-type G domain; the sequence is VRPPVVTIMG…LLLVADYELE (173 aa). The tract at residues 426–433 is G1; the sequence is GHVDHGKT. 426–433 provides a ligand contact to GTP; it reads GHVDHGKT. A G2 region spans residues 451–455; that stretch reads GITQH. The segment at 476 to 479 is G3; sequence DTPG. Residues 476–480 and 530–533 contribute to the GTP site; these read DTPGH and NKVD. Residues 530–533 are G4; it reads NKVD. The tract at residues 566 to 568 is G5; the sequence is SAK.

It belongs to the TRAFAC class translation factor GTPase superfamily. Classic translation factor GTPase family. IF-2 subfamily.

It is found in the cytoplasm. One of the essential components for the initiation of protein synthesis. Protects formylmethionyl-tRNA from spontaneous hydrolysis and promotes its binding to the 30S ribosomal subunits. Also involved in the hydrolysis of GTP during the formation of the 70S ribosomal complex. In Gloeobacter violaceus (strain ATCC 29082 / PCC 7421), this protein is Translation initiation factor IF-2.